A 159-amino-acid polypeptide reads, in one-letter code: Phosphopantetheine adenylyltransferase (159 aa).

T10 is a substrate binding site. ATP-binding positions include 10–11 and H18; that span reads TF. The substrate site is built by K42, M74, and R88. ATP is bound by residues 89 to 91, E99, and 124 to 130; these read GLR and WSFISSS.

This sequence belongs to the bacterial CoaD family. Homohexamer. The cofactor is Mg(2+).

It localises to the cytoplasm. The enzyme catalyses (R)-4'-phosphopantetheine + ATP + H(+) = 3'-dephospho-CoA + diphosphate. The protein operates within cofactor biosynthesis; coenzyme A biosynthesis; CoA from (R)-pantothenate: step 4/5. Reversibly transfers an adenylyl group from ATP to 4'-phosphopantetheine, yielding dephospho-CoA (dPCoA) and pyrophosphate. The polypeptide is Phosphopantetheine adenylyltransferase (Salmonella paratyphi A (strain ATCC 9150 / SARB42)).